Here is a 407-residue protein sequence, read N- to C-terminus: Zinc finger protein 552 (407 aa).

Positions 14 to 90 (VTFEDVAVKF…PMAGVSPKKA (77 aa)) constitute a KRAB domain. Residues 91-113 (HPCEMCGPILGDILHVADHQGTH) form a C2H2-type 1 zinc finger. The C2H2-type 2; degenerate zinc finger occupies 119 to 141 (HRCEAWGNKLYDSGNFHQHQNEH). Glycyl lysine isopeptide (Lys-Gly) (interchain with G-Cter in SUMO2) cross-links involve residues Lys176 and Lys198. The C2H2-type 3; degenerate zinc finger occupies 212–234 (YSCGGCMKHFSTKDILSQHERLL). The C2H2-type 4; degenerate zinc finger occupies 244–262 (ECGKSSSKYDSFSNHQGVH). Glycyl lysine isopeptide (Lys-Gly) (interchain with G-Cter in SUMO2) cross-links involve residues Lys251 and Lys266. C2H2-type zinc fingers lie at residues 268 to 290 (YTCGICGKLFNSKSHLLVHQRIH), 296 to 318 (YECEVCQKFFRHKYHLIAHQRVH), 324 to 346 (YECSDCGKSFTHSSTFRVHKRVH), 352 to 374 (YECSECGKSFAESSSLTKHRRVH), and 380 to 402 (YGCSECEKKFRQISSLRHHQRVH). A Glycyl lysine isopeptide (Lys-Gly) (interchain with G-Cter in SUMO2) cross-link involves residue Lys308.

The protein belongs to the krueppel C2H2-type zinc-finger protein family.

The protein localises to the nucleus. Its function is as follows. May be involved in transcriptional regulation. This is Zinc finger protein 552 (ZNF552) from Homo sapiens (Human).